Here is a 323-residue protein sequence, read N- to C-terminus: tRNA U34 carboxymethyltransferase (323 aa).

Residues Lys-91, Trp-105, Lys-110, Gly-130, 181-182 (IE), Met-196, Tyr-200, and Arg-315 each bind carboxy-S-adenosyl-L-methionine.

The protein belongs to the class I-like SAM-binding methyltransferase superfamily. CmoB family. In terms of assembly, homotetramer.

The enzyme catalyses carboxy-S-adenosyl-L-methionine + 5-hydroxyuridine(34) in tRNA = 5-carboxymethoxyuridine(34) in tRNA + S-adenosyl-L-homocysteine + H(+). Functionally, catalyzes carboxymethyl transfer from carboxy-S-adenosyl-L-methionine (Cx-SAM) to 5-hydroxyuridine (ho5U) to form 5-carboxymethoxyuridine (cmo5U) at position 34 in tRNAs. This Yersinia pseudotuberculosis serotype IB (strain PB1/+) protein is tRNA U34 carboxymethyltransferase.